Reading from the N-terminus, the 457-residue chain is Adenylosuccinate synthetase isozyme 2 A (457 aa).

Residues 40-46 (GDEGKGK) and 68-70 (GHT) each bind GTP. Asp41 acts as the Proton acceptor in catalysis. Mg(2+) contacts are provided by Asp41 and Gly68. Residue Asp41 coordinates substrate. IMP-binding positions include 41-44 (DEGK), 66-69 (NAGH), Thr163, Arg177, Asn256, Thr271, and Arg335. His69 (proton donor) is an active-site residue. 331-337 (VTTGRKR) contacts substrate. GTP-binding positions include Arg337, 363 to 365 (KLD), and 445 to 448 (GVGK).

It belongs to the adenylosuccinate synthetase family. Homodimer. Mg(2+) is required as a cofactor.

It is found in the cytoplasm. The protein resides in the mitochondrion. The enzyme catalyses IMP + L-aspartate + GTP = N(6)-(1,2-dicarboxyethyl)-AMP + GDP + phosphate + 2 H(+). It participates in purine metabolism; AMP biosynthesis via de novo pathway; AMP from IMP: step 1/2. With respect to regulation, inhibited competitively by AMP and IMP and non-competitively by fructose 1,6-bisphosphate. Plays an important role in the de novo pathway and in the salvage pathway of purine nucleotide biosynthesis. Catalyzes the first committed step in the biosynthesis of AMP from IMP. The chain is Adenylosuccinate synthetase isozyme 2 A (adss2-a) from Xenopus tropicalis (Western clawed frog).